We begin with the raw amino-acid sequence, 28 residues long: MSYIVRFTGLLLLNAFIVRGRPVGGIQH.

Functionally, involved in control of the biosynthesis of leucine. This Salmonella typhi protein is leu operon leader peptide (leuL).